The chain runs to 145 residues: MRLQSLSSVAIAETRRQIILTIINSLVYLVNFISCPSIHSIPFHISTHLTSCQANISLLKIVGLHCPFHRRGIASLSVCVALHWIAFSCSVMCHFAWSCALPCFVDSFFPSNFFLRTYALFTFSLQLWSGNDLQGNHSYLATPTR.

Helical transmembrane passes span 18–38 (IILT…CPSI) and 95–115 (FAWS…NFFL).

The protein localises to the membrane. Its function is as follows. Has a role in meiosis. The chain is Meiotically up-regulated gene 124 protein (mug124) from Schizosaccharomyces pombe (strain 972 / ATCC 24843) (Fission yeast).